A 103-amino-acid polypeptide reads, in one-letter code: uncharacterized protein (103 aa).

Disordered regions lie at residues 1 to 20 and 44 to 71; these read MIEL…WPKG and LERM…HHLG. The N-terminal stretch at 1–34 is a signal peptide; sequence MIELSYAPDVAGRRSNWPKGSGVNTWTAIRWTFA.

This is an uncharacterized protein from Mycobacterium tuberculosis (strain CDC 1551 / Oshkosh).